Consider the following 448-residue polypeptide: Probable intron-encoded endonuclease bI1 (448 aa).

The tract at residues 1 to 132 (MRLLKSHPLL…LMMATAFLGY (132 aa)) is cob exon 1 encoded. Helical transmembrane passes span 32–52 (FGSLLACCLIIQIVTGVTLAM), 86–106 (ASAFFFLVYLHIGRGMYYGSY), and 112–132 (LVWAIGTVILILMMATAFLGY). The segment at 133–448 (QHSPKWFDIS…QWIVEDFSDK (316 aa)) is cob intron 1 encoded. Residues 230-321 (DLSGVYMIIN…LKLLVPNYNI (92 aa)) enclose the GIY-YIG domain.

This sequence to endonucleases of group I introns of fungi and phage. The mature protein may arise from proteolytic cleavage of an in-frame translation of cob exon 1 plus intron 1, containing the bI1 open reading frame.

The protein resides in the mitochondrion inner membrane. In terms of biological role, mitochondrial DNA endonuclease involved in intron homing. The sequence is that of Probable intron-encoded endonuclease bI1 (bI1) from Neurospora crassa (strain ATCC 24698 / 74-OR23-1A / CBS 708.71 / DSM 1257 / FGSC 987).